The primary structure comprises 170 residues: Zinc finger A20 and AN1 domain-containing stress-associated protein 6 (170 aa).

An A20-type zinc finger spans residues 10–44 (PESNRLCVNNCGFLGSSATMNLCSNCYGDLCLKQQ). Cys16, Cys20, Cys32, and Cys35 together coordinate Zn(2+). Residues 53–76 (TVESSLSVSPPSSSSSEISSPIIP) are disordered. The segment at 105-151 (QQRPNRCTTCRKRVGLTGFKCRCGTMFCGVHRYPEIHGCSYDFKSAG) adopts an AN1-type zinc-finger fold. Residues Cys111, Cys114, Cys125, Cys127, Cys132, His135, His141, and Cys143 each coordinate Zn(2+).

Functionally, may be involved in environmental stress response. The chain is Zinc finger A20 and AN1 domain-containing stress-associated protein 6 (SAP6) from Arabidopsis thaliana (Mouse-ear cress).